The sequence spans 307 residues: MTTSTTGVVVQGTGGVWEVYTEQGERFSASMRGRLKHEAHGALKLAVGDRVTIARDAQHAETWAITDIHPRTSKLARRMPGGRYGERIVVANLDQVLVVFAAARPDPHPRMLDRFLVIAEANGLSARIVINKADLVSPEVSAALFADQMAAGYPVHHTSIHTGEGLEALRDEVEHRSSALSGPSGVGKSSLMNALFPGLDLRTAAVSDAVNKGRHTTVGAMLHPLPHGGFIADTPGLREVGLWGIEAGQVASCFPEFRPLLSACRFADCIHTVEPGCAVREAVEAGDVSPGRYESYVKLRDELMGRS.

In terms of domain architecture, CP-type G spans 82–240; sequence GRYGERIVVA…IADTPGLREV (159 aa). Residues 131–134 and 182–190 each bind GTP; these read NKAD and GPSGVGKSS. 4 residues coordinate Zn(2+): Cys-264, Cys-269, His-271, and Cys-277.

It belongs to the TRAFAC class YlqF/YawG GTPase family. RsgA subfamily. As to quaternary structure, monomer. Associates with 30S ribosomal subunit, binds 16S rRNA. Requires Zn(2+) as cofactor.

It localises to the cytoplasm. Functionally, one of several proteins that assist in the late maturation steps of the functional core of the 30S ribosomal subunit. Helps release RbfA from mature subunits. May play a role in the assembly of ribosomal proteins into the subunit. Circularly permuted GTPase that catalyzes slow GTP hydrolysis, GTPase activity is stimulated by the 30S ribosomal subunit. The chain is Small ribosomal subunit biogenesis GTPase RsgA from Gemmatimonas aurantiaca (strain DSM 14586 / JCM 11422 / NBRC 100505 / T-27).